The chain runs to 367 residues: Dual-specificity RNA methyltransferase RlmN (367 aa).

The active-site Proton acceptor is the Glu93. A Radical SAM core domain is found at 99-333 (EEDRATLCVS…VIVRKTRGDD (235 aa)). The cysteines at positions 106 and 338 are disulfide-linked. Residues Cys113, Cys117, and Cys120 each contribute to the [4Fe-4S] cluster site. S-adenosyl-L-methionine-binding positions include 162 to 163 (GE), Ser194, 216 to 218 (SLH), and Asn295. Cys338 (S-methylcysteine intermediate) is an active-site residue.

The protein belongs to the radical SAM superfamily. RlmN family. The cofactor is [4Fe-4S] cluster.

It is found in the cytoplasm. It catalyses the reaction adenosine(2503) in 23S rRNA + 2 reduced [2Fe-2S]-[ferredoxin] + 2 S-adenosyl-L-methionine = 2-methyladenosine(2503) in 23S rRNA + 5'-deoxyadenosine + L-methionine + 2 oxidized [2Fe-2S]-[ferredoxin] + S-adenosyl-L-homocysteine. The enzyme catalyses adenosine(37) in tRNA + 2 reduced [2Fe-2S]-[ferredoxin] + 2 S-adenosyl-L-methionine = 2-methyladenosine(37) in tRNA + 5'-deoxyadenosine + L-methionine + 2 oxidized [2Fe-2S]-[ferredoxin] + S-adenosyl-L-homocysteine. Its function is as follows. Specifically methylates position 2 of adenine 2503 in 23S rRNA and position 2 of adenine 37 in tRNAs. m2A2503 modification seems to play a crucial role in the proofreading step occurring at the peptidyl transferase center and thus would serve to optimize ribosomal fidelity. The protein is Dual-specificity RNA methyltransferase RlmN of Aeromonas hydrophila subsp. hydrophila (strain ATCC 7966 / DSM 30187 / BCRC 13018 / CCUG 14551 / JCM 1027 / KCTC 2358 / NCIMB 9240 / NCTC 8049).